A 667-amino-acid polypeptide reads, in one-letter code: 1-deoxy-D-xylulose-5-phosphate synthase (667 aa).

Thiamine diphosphate is bound by residues histidine 73 and 113–115 (SHA). Residue aspartate 145 coordinates Mg(2+). Thiamine diphosphate contacts are provided by residues 146–147 (GA), asparagine 175, tyrosine 297, and glutamate 379. Asparagine 175 lines the Mg(2+) pocket.

Belongs to the transketolase family. DXPS subfamily. As to quaternary structure, homodimer. The cofactor is Mg(2+). Requires thiamine diphosphate as cofactor.

It carries out the reaction D-glyceraldehyde 3-phosphate + pyruvate + H(+) = 1-deoxy-D-xylulose 5-phosphate + CO2. The protein operates within metabolic intermediate biosynthesis; 1-deoxy-D-xylulose 5-phosphate biosynthesis; 1-deoxy-D-xylulose 5-phosphate from D-glyceraldehyde 3-phosphate and pyruvate: step 1/1. Catalyzes the acyloin condensation reaction between C atoms 2 and 3 of pyruvate and glyceraldehyde 3-phosphate to yield 1-deoxy-D-xylulose-5-phosphate (DXP). This is 1-deoxy-D-xylulose-5-phosphate synthase from Kocuria rhizophila (strain ATCC 9341 / DSM 348 / NBRC 103217 / DC2201).